The chain runs to 149 residues: Sec-independent protein translocase protein TatB (149 aa).

A helical transmembrane segment spans residues 1–22; sequence MFDGIGFMELLLIGVLGLIVLG. A compositionally biased stretch (polar residues) spans 86–113; it reads LKQAAQSVNRPYQVQDTPSAQDNQIHNP. Residues 86-149 are disordered; that stretch reads LKQAAQSVNR…DPRSNTKANG (64 aa). Residues 114–135 are compositionally biased toward low complexity; sequence ASQTVSTEASSTSASSAPKSES.

The protein belongs to the TatB family. The Tat system comprises two distinct complexes: a TatABC complex, containing multiple copies of TatA, TatB and TatC subunits, and a separate TatA complex, containing only TatA subunits. Substrates initially bind to the TatABC complex, which probably triggers association of the separate TatA complex to form the active translocon.

Its subcellular location is the cell inner membrane. Its function is as follows. Part of the twin-arginine translocation (Tat) system that transports large folded proteins containing a characteristic twin-arginine motif in their signal peptide across membranes. Together with TatC, TatB is part of a receptor directly interacting with Tat signal peptides. TatB may form an oligomeric binding site that transiently accommodates folded Tat precursor proteins before their translocation. The chain is Sec-independent protein translocase protein TatB from Shewanella oneidensis (strain ATCC 700550 / JCM 31522 / CIP 106686 / LMG 19005 / NCIMB 14063 / MR-1).